Consider the following 82-residue polypeptide: Small ribosomal subunit protein bS18 (82 aa).

This sequence belongs to the bacterial ribosomal protein bS18 family. In terms of assembly, part of the 30S ribosomal subunit. Forms a tight heterodimer with protein bS6.

Binds as a heterodimer with protein bS6 to the central domain of the 16S rRNA, where it helps stabilize the platform of the 30S subunit. The chain is Small ribosomal subunit protein bS18 from Methylobacterium nodulans (strain LMG 21967 / CNCM I-2342 / ORS 2060).